Consider the following 208-residue polypeptide: Phosphoribosyl-dephospho-CoA transferase (208 aa).

Active-site residues include Asp133 and Asp135.

The protein belongs to the MdcG family.

The enzyme catalyses apo-[malonate decarboxylase ACP] + 2'-(5''-triphospho-alpha-D-ribosyl)-3'-dephospho-CoA = holo-[malonate decarboxylase ACP] + diphosphate. Transfers 2'-(5-triphosphoribosyl)-3'-dephosphocoenzyme-A to the apo-[acyl-carrier-protein] of the malonate decarboxylase to yield holo-[acyl-carrier-protein]. The sequence is that of Phosphoribosyl-dephospho-CoA transferase from Pseudomonas fluorescens (strain ATCC BAA-477 / NRRL B-23932 / Pf-5).